Consider the following 214-residue polypeptide: Zinc finger protein 11 (214 aa).

Residues 1-27 (MKRTHLASFSNRDKTQEEEGEDGNGDN) are disordered. The C2H2-type zinc finger occupies 49-71 (YTCSFCRREFRSAQALGGHMNVH). A Nuclear localization signal motif is present at residues 72-79 (RRDRAKLR). Positions 89 to 130 (HHHTPIANPNPNFSSSSSSSTTTAHLEPSLTNQRSKTTPFPS) are disordered. Over residues 102–111 (SSSSSSSTTT) the composition is skewed to low complexity. Residues 117–128 (SLTNQRSKTTPF) are compositionally biased toward polar residues.

Expressed in roots, stems, axillary buds and flowers.

Its subcellular location is the nucleus. Probable transcription factor that may regulate cell division and growth. This is Zinc finger protein 11 from Arabidopsis thaliana (Mouse-ear cress).